We begin with the raw amino-acid sequence, 492 residues long: ATP synthase subunit beta, chloroplastic (492 aa).

An ATP-binding site is contributed by 170-177 (GGAGVGKT).

It belongs to the ATPase alpha/beta chains family. As to quaternary structure, F-type ATPases have 2 components, CF(1) - the catalytic core - and CF(0) - the membrane proton channel. CF(1) has five subunits: alpha(3), beta(3), gamma(1), delta(1), epsilon(1). CF(0) has four main subunits: a(1), b(1), b'(1) and c(9-12).

The protein resides in the plastid. The protein localises to the chloroplast thylakoid membrane. It carries out the reaction ATP + H2O + 4 H(+)(in) = ADP + phosphate + 5 H(+)(out). Functionally, produces ATP from ADP in the presence of a proton gradient across the membrane. The catalytic sites are hosted primarily by the beta subunits. In Psilotum nudum (Whisk fern), this protein is ATP synthase subunit beta, chloroplastic.